The primary structure comprises 209 residues: Large ribosomal subunit protein uL4 (209 aa).

The tract at residues 50-89 (MTKTKGLVSGGGKKPFKQKGTGGARQGSSRSILMPGGGTA) is disordered.

It belongs to the universal ribosomal protein uL4 family. As to quaternary structure, part of the 50S ribosomal subunit.

One of the primary rRNA binding proteins, this protein initially binds near the 5'-end of the 23S rRNA. It is important during the early stages of 50S assembly. It makes multiple contacts with different domains of the 23S rRNA in the assembled 50S subunit and ribosome. In terms of biological role, forms part of the polypeptide exit tunnel. The protein is Large ribosomal subunit protein uL4 of Bdellovibrio bacteriovorus (strain ATCC 15356 / DSM 50701 / NCIMB 9529 / HD100).